A 392-amino-acid polypeptide reads, in one-letter code: MIIKLIFLICFKIVLSIDNKTKFNETLILDNIDYWVKFNDTITLDSNITSEIEAVSWNFYNNTFNLLAICGKASNFCSCSNYSTSFFNITNNCSLTIFLIDETLFNTTYQIVYSTNIINYKINLLIPVTPPIISYNCANCSINCKKSNGTNTNIFLSINDTIVTYTNESILNYDYNCSILNNNFTVTCIINNTISTSNTTEFINCTNILLSSYLDFFQVTSYIFYMIIFIVTGITVSILISIITFLFIRKRKHVEEIESPPPESNEEEQQCHHDTTSIHEPSPREPLLPKPYSRYQYNTPIYYMRPSTQQLFKSYSLPKPCPPPKPCPPPKPCPPPKPCPPSKPCPPPEPYSPPKPCPPPKPYPSLPSIPLPPDIPPLSTQNISLIHVDRII.

The first 16 residues, 1–16, serve as a signal peptide directing secretion; that stretch reads MIIKLIFLICFKIVLS. Residues 17 to 222 lie on the Extracellular side of the membrane; the sequence is IDNKTKFNET…YLDFFQVTSY (206 aa). N-linked (GlcNAc...) asparagine; by host glycosylation is found at N39, N88, N92, N106, N148, N159, N183, N191, N198, and N204. Disulfide bonds link C137/C205 and C144/C188. The helical transmembrane segment at 223–243 threads the bilayer; the sequence is IFYMIIFIVTGITVSILISII. Residues 244 to 392 lie on the Cytoplasmic side of the membrane; the sequence is TFLFIRKRKH…ISLIHVDRII (149 aa). The segment at 258–290 is disordered; sequence ESPPPESNEEEQQCHHDTTSIHEPSPREPLLPK. The span at 269-283 shows a compositional bias: basic and acidic residues; sequence QQCHHDTTSIHEPSP. 5 consecutive repeat copies span residues 319–324, 325–330, 331–336, 337–342, and 343–348. A 5 X 6 AA tandem repeats of K-P-C-[PRS]-[P]-[PS] region spans residues 319–348; the sequence is KPCPPPKPCPPPKPCPPPKPCPPSKPCPPP. The tract at residues 328 to 357 is disordered; sequence PPPKPCPPPKPCPPSKPCPPPEPYSPPKPC.

It belongs to the asfivirus CD2 homolog protein family. As to quaternary structure, both glycosylated and nonglycosylated forms interact (via C-terminus) with the host AP-1 complex. Cleaved into two fragments of 63 kDa and 26 kDa containing respectively the glycosylated N-terminus and the nonglycosylated C-terminus. A full-length 89-kDa glycosylated form also exists.

The protein resides in the host cell membrane. It is found in the virion membrane. It localises to the host Golgi apparatus. May play an immunosuppressive role by inhibiting lymphocyte proliferation and subsequently facilitating viral replication and generalization of infection. Responsible for viral hemadsorption, which may help viral spread. Increases virus replication in the tick vector at the step of virus uptake or replication in the tick gut. May play a role in the host Golgi reorganization to yield viral factories. May play a role in host cell penetration. The sequence is that of CD2 homolog from Ornithodoros (relapsing fever ticks).